The chain runs to 101 residues: Small ribosomal subunit protein eS24 (101 aa).

This sequence belongs to the eukaryotic ribosomal protein eS24 family.

The protein is Small ribosomal subunit protein eS24 of Methanosarcina barkeri (strain Fusaro / DSM 804).